The following is a 222-amino-acid chain: Riboflavin kinase (222 aa).

Residues 1–94 (METIDAEDAA…AKIFDVKDEQ (94 aa)) are H-T-H motif-like. The segment at 95–222 (YVLTGTVMSG…ENSEVVVVIG (128 aa)) is riboflavin kinase. Residue 104-109 (GVGEGR) participates in CDP binding. Residues Thr-133 and Asn-135 each contribute to the Mg(2+) site. FMN contacts are provided by Thr-190 and Glu-198. 203–206 (TQLR) is a CDP binding site.

It belongs to the archaeal riboflavin kinase family. Mg(2+) is required as a cofactor.

It catalyses the reaction riboflavin + CTP = CDP + FMN + H(+). Its pathway is cofactor biosynthesis; FMN biosynthesis; FMN from riboflavin (CTP route): step 1/1. Functionally, catalyzes the CTP-dependent phosphorylation of riboflavin (vitamin B2) to form flavin mononucleotide (FMN). In Methanocorpusculum labreanum (strain ATCC 43576 / DSM 4855 / Z), this protein is Riboflavin kinase (ribK).